Here is a 124-residue protein sequence, read N- to C-terminus: Ribonuclease P protein component 2 (124 aa).

The protein belongs to the eukaryotic/archaeal RNase P protein component 2 family. Consists of a catalytic RNA component and at least 4-5 protein subunits.

It is found in the cytoplasm. It carries out the reaction Endonucleolytic cleavage of RNA, removing 5'-extranucleotides from tRNA precursor.. Its function is as follows. Part of ribonuclease P, a protein complex that generates mature tRNA molecules by cleaving their 5'-ends. This is Ribonuclease P protein component 2 from Methanothermobacter thermautotrophicus (strain ATCC 29096 / DSM 1053 / JCM 10044 / NBRC 100330 / Delta H) (Methanobacterium thermoautotrophicum).